The primary structure comprises 431 residues: Signal recognition particle 54 kDa protein (431 aa).

GTP-binding positions include 105 to 112 (GVEGSGKT), 185 to 189 (DTAGR), and 243 to 246 (TKMD).

It belongs to the GTP-binding SRP family. SRP54 subfamily. As to quaternary structure, part of the signal recognition particle protein translocation system, which is composed of SRP and FtsY. Archaeal SRP consists of a 7S RNA molecule of 300 nucleotides and two protein subunits: SRP54 and SRP19.

It is found in the cytoplasm. It catalyses the reaction GTP + H2O = GDP + phosphate + H(+). Functionally, involved in targeting and insertion of nascent membrane proteins into the cytoplasmic membrane. Binds to the hydrophobic signal sequence of the ribosome-nascent chain (RNC) as it emerges from the ribosomes. The SRP-RNC complex is then targeted to the cytoplasmic membrane where it interacts with the SRP receptor FtsY. The protein is Signal recognition particle 54 kDa protein of Pyrobaculum calidifontis (strain DSM 21063 / JCM 11548 / VA1).